A 56-amino-acid polypeptide reads, in one-letter code: Large ribosomal subunit protein bL32 (56 aa).

Positions 1-21 are disordered; it reads MAVQKNKPTRSKRGMRRSHDA. Basic residues predominate over residues 7–16; sequence KPTRSKRGMR.

This sequence belongs to the bacterial ribosomal protein bL32 family.

The chain is Large ribosomal subunit protein bL32 from Hamiltonella defensa subsp. Acyrthosiphon pisum (strain 5AT).